The sequence spans 200 residues: Glycerol-3-phosphate acyltransferase (200 aa).

5 helical membrane-spanning segments follow: residues 2–22 (FNIPAVAVSYLIGSLSFAVIV), 51–71 (KAAALTLLGDAAKGLVAVLLA), 84–104 (AIAAVALAALVGHMWPVFFGF), 114–134 (LGVLLALSPTTALVCALIWLV), and 158–178 (LFFMPHTSWIFATLAIAILVL).

Belongs to the PlsY family. As to quaternary structure, probably interacts with PlsX.

The protein resides in the cell inner membrane. The enzyme catalyses an acyl phosphate + sn-glycerol 3-phosphate = a 1-acyl-sn-glycero-3-phosphate + phosphate. It functions in the pathway lipid metabolism; phospholipid metabolism. Catalyzes the transfer of an acyl group from acyl-phosphate (acyl-PO(4)) to glycerol-3-phosphate (G3P) to form lysophosphatidic acid (LPA). This enzyme utilizes acyl-phosphate as fatty acyl donor, but not acyl-CoA or acyl-ACP. This chain is Glycerol-3-phosphate acyltransferase, found in Neisseria meningitidis serogroup A / serotype 4A (strain DSM 15465 / Z2491).